The sequence spans 367 residues: GDSL esterase/lipase At4g28780 (367 aa).

The first 28 residues, 1–28, serve as a signal peptide directing secretion; sequence MSTFLLTWIIMTVALSVTLFLMPQQTNA. Ser-38 (nucleophile) is an active-site residue. Asn-119 carries N-linked (GlcNAc...) asparagine glycosylation. Active-site residues include Asp-328 and His-331. An N-linked (GlcNAc...) asparagine glycan is attached at Asn-356.

Belongs to the 'GDSL' lipolytic enzyme family.

It localises to the secreted. This chain is GDSL esterase/lipase At4g28780, found in Arabidopsis thaliana (Mouse-ear cress).